Consider the following 485-residue polypeptide: Zinc finger protein 639 (485 aa).

Residues 1–14 (MNEYPKKRKRKTLH) show a composition bias toward basic residues. 2 disordered regions span residues 1–23 (MNEYPKKRKRKTLHPSRYSDSSG) and 54–80 (DNKDDDSDPETANDLPKFADGTKARNR). Serine 60 is modified (phosphoserine). Lysine 76 participates in a covalent cross-link: Glycyl lysine isopeptide (Lys-Gly) (interchain with G-Cter in SUMO2). Serine 88 is subject to Phosphoserine. The segment at 115–136 (ASPESVHQHTQEESPIEVHTSE) is disordered. Glycyl lysine isopeptide (Lys-Gly) (interchain with G-Cter in SUMO2) cross-links involve residues lysine 177, lysine 181, and lysine 226. 8 consecutive C2H2-type zinc fingers follow at residues 204–227 (YKCELCEFNSKYFSDLKQHVILKH), 233–255 (NVCRVCKESFSTNMLLIEHAKLH), 260–283 (YICKYCDYKTVIFENLSQHIADTH), 289–311 (YWCEQCDVQFSSSSELYLHFQEH), 374–397 (FVCQVCGFRSRLHTNVNRHVAIEH), 403–425 (HVCDDCGKGFSSMLEYCKHLNSH), 431–454 (YLCQYCEYSTGQIDDLKIHLDFKH), and 460–482 (HKCSECLMRFGNERDLLGHLQVH). Residues 371–455 (KNFFVCQVCG…LKIHLDFKHS (85 aa)) are interaction with CTNNA2.

This sequence belongs to the krueppel C2H2-type zinc-finger protein family. As to quaternary structure, interacts with CTNNA2.

The protein localises to the nucleus. Functionally, binds DNA and may function as a transcriptional repressor. This chain is Zinc finger protein 639 (Znf639), found in Mus musculus (Mouse).